A 463-amino-acid chain; its full sequence is Ammonium transporter 1 (463 aa).

Residues 1-39 (MVAGEIIKGVAAEITNGSSSSVVQKYLDCANQVAPDPGN) are Extracellular-facing. A helical transmembrane segment spans residues 40-60 (TTWVLLSTILVLGMMPALAFF). The Cytoplasmic portion of the chain corresponds to 61–76 (EAGLLRSKNTLSIITQ). A helical transmembrane segment spans residues 77 to 97 (IMSGIVVLTVMWQAFGYSLTF). The Extracellular portion of the chain corresponds to 98 to 127 (GPDQKGIIGNLDHAFLINVSYDDCSPNAPN). A helical transmembrane segment spans residues 128–148 (IPAAAYAFFMMMFANITPLLM). Over 149-160 (TGAFAERVKFKA) the chain is Cytoplasmic. The chain crosses the membrane as a helical span at residues 161–181 (FIALTVAWEIIVFYPVAHWIW). The Extracellular segment spans residues 182–194 (GGGWLHKYFGVLD). Residues 195-215 (FAGGIVIHTSAGVSALVIALY) form a helical membrane-spanning segment. Over 216 to 233 (VGRRKDFEKYGGEFPPSN) the chain is Cytoplasmic. The helical transmembrane segment at 234 to 254 (LPLATIGAALLWMGWFGFNAG) threads the bilayer. At 255-265 (SALAAGNIATS) the chain is on the extracellular side. A helical transmembrane segment spans residues 266–286 (AVASTQIGGSFSAIVWIILSA). At 287–293 (AKGKPNT) the chain is on the cytoplasmic side. The helical transmembrane segment at 294–314 (VSVINGVIAGLAGITPASGYI) threads the bilayer. Over 315-316 (NS) the chain is Extracellular. The helical transmembrane segment at 317–337 (QYSIGLGICLGLASYYSVVLL) threads the bilayer. Over 338–351 (KHKLHIDDALDVSS) the chain is Cytoplasmic. Residues 352-372 (VHGLTGIIGSLAIGFCAELSV) traverse the membrane as a helical segment. The Extracellular segment spans residues 373 to 392 (NPNGANGAFYGNPKLIGTQL). The helical transmembrane segment at 393-413 (LGVVSVAVWAAAWTWVLLKII) threads the bilayer. Residues 414–463 (DATIGVKIDESEEELGLDLVEHGEFAYHNISLQGNENHYSSVINSHDFFK) lie on the Cytoplasmic side of the membrane.

The protein belongs to the ammonia transporter channel (TC 1.A.11.2) family.

It is found in the cell membrane. Its subcellular location is the endosome membrane. The protein localises to the lysosome membrane. The protein resides in the cytoplasmic vesicle. It localises to the phagosome membrane. Ammonium transporter that mediates the excretion of ammonium. Controls ammonium homeostasis during growth and development. Ammonium has been shown to function as a morphogen at multiple steps during the development. This is Ammonium transporter 1 (amtA) from Dictyostelium discoideum (Social amoeba).